Consider the following 264-residue polypeptide: Meiotically up-regulated gene 162 protein (264 aa).

Transmembrane regions (helical) follow at residues 18–38, 54–74, 84–104, 140–160, 174–194, 199–219, and 223–243; these read IVIF…WNLK, LWIY…AGSA, VFQV…GYSF, IISI…LLFL, HLSY…IKLI, FVLG…SLIT, and LISY…IWIY.

It localises to the endoplasmic reticulum membrane. Has a role in meiosis. This chain is Meiotically up-regulated gene 162 protein (mug162), found in Schizosaccharomyces pombe (strain 972 / ATCC 24843) (Fission yeast).